The primary structure comprises 413 residues: Serine--tRNA ligase (413 aa).

221 to 223 contributes to the L-serine binding site; the sequence is TAE. 252-254 serves as a coordination point for ATP; the sequence is RRE. Residue Glu275 participates in L-serine binding. 339-342 provides a ligand contact to ATP; the sequence is EVSS. Residue Ser375 coordinates L-serine.

This sequence belongs to the class-II aminoacyl-tRNA synthetase family. Type-1 seryl-tRNA synthetase subfamily. In terms of assembly, homodimer. The tRNA molecule binds across the dimer.

It localises to the cytoplasm. The enzyme catalyses tRNA(Ser) + L-serine + ATP = L-seryl-tRNA(Ser) + AMP + diphosphate + H(+). It carries out the reaction tRNA(Sec) + L-serine + ATP = L-seryl-tRNA(Sec) + AMP + diphosphate + H(+). It functions in the pathway aminoacyl-tRNA biosynthesis; selenocysteinyl-tRNA(Sec) biosynthesis; L-seryl-tRNA(Sec) from L-serine and tRNA(Sec): step 1/1. Functionally, catalyzes the attachment of serine to tRNA(Ser). Is also able to aminoacylate tRNA(Sec) with serine, to form the misacylated tRNA L-seryl-tRNA(Sec), which will be further converted into selenocysteinyl-tRNA(Sec). In Dehalococcoides mccartyi (strain ATCC BAA-2266 / KCTC 15142 / 195) (Dehalococcoides ethenogenes (strain 195)), this protein is Serine--tRNA ligase.